A 333-amino-acid polypeptide reads, in one-letter code: MSSSSPTSSGKPLKLRIDRDNEGYLSLVTDTGEVYRCPICGNDRFVYNYERGEIVCIVCGAVVQEQLLDLGPEWRAFTSEEKGQRARTGAPLTRLISEALTTVIDWRDKDVSGKELDIKRKLEVIRLRKWQTRARVQTSYERNFIQAAQELERLRSSMGVPRPCVEQALEIYRQALEKELVRGRSVEAMAAAALYMACRMMKMPRPLDELVRYTKASRREVARCYRLLLRELNVKVPISDPVLYISRIAEQLKLSGEVVKTAIEILQKAKKAGITAGKDPAGLAAAAVYIASLLHGDNRTQKDFAVAAGVTEVTVRNRYKELAKTLNIKVPVK.

A TFIIB-type zinc finger spans residues glutamate 33 to glutamine 64. Cysteine 37, cysteine 40, cysteine 56, and cysteine 59 together coordinate Zn(2+). 2 repeat units span residues glutamine 149–leucine 232 and leucine 243–lysine 324.

Belongs to the TFIIB family.

Its function is as follows. Stabilizes TBP binding to an archaeal box-A promoter. Also responsible for recruiting RNA polymerase II to the pre-initiation complex (DNA-TBP-TFIIB). The sequence is that of Transcription initiation factor IIB from Pyrobaculum islandicum (strain DSM 4184 / JCM 9189 / GEO3).